The following is a 180-amino-acid chain: MSNGDRLIWIDLEMTGLDPEQERIIEMASIITDSQLNIVAEGPVIAIHQPDSLLEQMDEWCTRTHGASGLTQRVKESTISEAEAEQQTLEFLGKHLEPGQSPLCGNSIGQDRRFLVKYMPKLEAFFHYRNLDVSTVKELARRWRPDVLEGVKKQGSHLALDDIRDSINELRHYRDHFFKL.

Residues 7–170 form the Exonuclease domain; that stretch reads LIWIDLEMTG…DDIRDSINEL (164 aa). The active site involves tyrosine 128.

The protein belongs to the oligoribonuclease family.

Its subcellular location is the cytoplasm. Its function is as follows. 3'-to-5' exoribonuclease specific for small oligoribonucleotides. This is Oligoribonuclease from Marinobacter nauticus (strain ATCC 700491 / DSM 11845 / VT8) (Marinobacter aquaeolei).